The chain runs to 427 residues: UDP-N-acetyl-D-mannosamine dehydrogenase (427 aa).

Residues Tyr-19, Ile-20, Asp-39, Arg-44, Thr-91, and Thr-130 each coordinate NAD(+). The UDP-N-acetyl-alpha-D-mannosaminouronate site is built by Arg-155, Val-156, Lys-207, Asn-211, Arg-214, His-245, Arg-247, and Gly-258. Lys-207 (proton donor/acceptor) is an active-site residue. Cys-261 acts as the Nucleophile in catalysis. The UDP-N-acetyl-alpha-D-mannosaminouronate site is built by Tyr-318 and Lys-319. Residue Arg-326 participates in NAD(+) binding. Lys-404 contacts UDP-N-acetyl-alpha-D-mannosaminouronate.

It belongs to the UDP-glucose/GDP-mannose dehydrogenase family. Homotetramer; probably dimer of dimers.

The catalysed reaction is UDP-N-acetyl-alpha-D-mannosamine + 2 NAD(+) + H2O = UDP-N-acetyl-alpha-D-mannosaminouronate + 2 NADH + 3 H(+). Its function is as follows. Catalyzes the four-electron oxidation of UDP-N-acetyl-D-mannosamine (UDP-ManNAc), reducing NAD(+) and releasing UDP-N-acetylmannosaminuronic acid (UDP-ManNAcA). The chain is UDP-N-acetyl-D-mannosamine dehydrogenase (wecC) from Methanococcus maripaludis (strain C7 / ATCC BAA-1331).